The primary structure comprises 893 residues: DNA gyrase subunit A (893 aa).

Positions 35-501 constitute a Topo IIA-type catalytic domain; it reads LPDVRDGLKP…GLEDLEDEDL (467 aa). Residue Tyr123 is the O-(5'-phospho-DNA)-tyrosine intermediate of the active site. The short motif at 528–534 is the GyrA-box element; it reads QNRGGRG. Residues 810–893 are disordered; that stretch reads VNEEDDNEEN…ASDNEEDSDE (84 aa). 2 stretches are compositionally biased toward acidic residues: residues 812 to 821 and 852 to 862; these read EEDDNEENAD and DAEMESVESPE. The span at 863 to 879 shows a compositional bias: basic and acidic residues; the sequence is NDDRIDIRQDFMDRVNE. Residues 880–893 show a composition bias toward acidic residues; the sequence is DIESASDNEEDSDE.

Belongs to the type II topoisomerase GyrA/ParC subunit family. In terms of assembly, heterotetramer, composed of two GyrA and two GyrB chains. In the heterotetramer, GyrA contains the active site tyrosine that forms a transient covalent intermediate with DNA, while GyrB binds cofactors and catalyzes ATP hydrolysis.

Its subcellular location is the cytoplasm. It catalyses the reaction ATP-dependent breakage, passage and rejoining of double-stranded DNA.. In terms of biological role, a type II topoisomerase that negatively supercoils closed circular double-stranded (ds) DNA in an ATP-dependent manner to modulate DNA topology and maintain chromosomes in an underwound state. Negative supercoiling favors strand separation, and DNA replication, transcription, recombination and repair, all of which involve strand separation. Also able to catalyze the interconversion of other topological isomers of dsDNA rings, including catenanes and knotted rings. Type II topoisomerases break and join 2 DNA strands simultaneously in an ATP-dependent manner. This is DNA gyrase subunit A from Staphylococcus epidermidis (strain ATCC 35984 / DSM 28319 / BCRC 17069 / CCUG 31568 / BM 3577 / RP62A).